Here is a 223-residue protein sequence, read N- to C-terminus: Golgi SNAP receptor complex member 1 (223 aa).

At Ser2 the chain carries N-acetylserine. At 2 to 204 the chain is on the cytoplasmic side; the sequence is SSQPSFVTIR…MKINTRRKKN (203 aa). Ser164 is subject to Phosphoserine. A helical; Anchor for type IV membrane protein membrane pass occupies residues 205 to 222; the sequence is AFVLATITTLCILFLFFT. A topological domain (vesicular) is located at residue Trp223.

Belongs to the GOSR1 family. As to quaternary structure, component of several multiprotein Golgi SNARE complexes. Identified in a Golgi SNARE complex consisting of t-SNARES SED5, YKT6, and the v-SNARE SFT1. Interacts with BET1. Interacts with BOS1. Interacts with SEC22. Interacts with PEP12. Interacts with self.

The protein localises to the golgi apparatus membrane. Involved in transport from the ER to the Golgi apparatus as well as in intra-Golgi transport. It belongs to a super-family of proteins called t-SNAREs or soluble NSF (N-ethylmaleimide-sensitive factor) attachment protein receptor. Rescues alpha-factor maturation defects. This chain is Golgi SNAP receptor complex member 1 (GOS1), found in Saccharomyces cerevisiae (strain ATCC 204508 / S288c) (Baker's yeast).